Reading from the N-terminus, the 97-residue chain is Citrate lyase acyl carrier protein (97 aa).

Residue S14 is modified to O-(phosphoribosyl dephospho-coenzyme A)serine.

It belongs to the CitD family. As to quaternary structure, oligomer with a subunit composition of (alpha,beta,gamma)6.

It localises to the cytoplasm. Its function is as follows. Covalent carrier of the coenzyme of citrate lyase. The sequence is that of Citrate lyase acyl carrier protein from Rhodopseudomonas palustris (strain BisA53).